A 395-amino-acid polypeptide reads, in one-letter code: Cytoplasmic tRNA 2-thiolation protein 1 (395 aa).

Basic residues predominate over residues 297 to 309 (TVAYKNKNKNKKK). The tract at residues 297–335 (TVAYKNKNKNKKKSNSEQEEQEKQEQEVNPDGSISLNRN) is disordered.

This sequence belongs to the TtcA family. CTU1/NCS6/ATPBD3 subfamily.

Its subcellular location is the cytoplasm. The protein operates within tRNA modification; 5-methoxycarbonylmethyl-2-thiouridine-tRNA biosynthesis. Its function is as follows. Plays a central role in 2-thiolation of mcm(5)S(2)U at tRNA wobble positions of tRNA(Lys), tRNA(Glu) and tRNA(Gln). Directly binds tRNAs and probably acts by catalyzing adenylation of tRNAs, an intermediate required for 2-thiolation. It is unclear whether it acts as a sulfurtransferase that transfers sulfur from thiocarboxylated URM1 onto the uridine of tRNAs at wobble position. Prior mcm(5) tRNA modification by the elongator complex is required for 2-thiolation. May also be involved in protein urmylation. In Candida albicans (strain SC5314 / ATCC MYA-2876) (Yeast), this protein is Cytoplasmic tRNA 2-thiolation protein 1.